Reading from the N-terminus, the 435-residue chain is Histidinol dehydrogenase (435 aa).

NAD(+) is bound by residues Y131, Q189, and N212. Substrate contacts are provided by S238, Q260, and H263. Residues Q260 and H263 each coordinate Zn(2+). Residues E327 and H328 each act as proton acceptor in the active site. Substrate contacts are provided by H328, D361, E415, and H420. Position 361 (D361) interacts with Zn(2+). H420 provides a ligand contact to Zn(2+).

The protein belongs to the histidinol dehydrogenase family. Homodimer. Zn(2+) serves as cofactor.

It carries out the reaction L-histidinol + 2 NAD(+) + H2O = L-histidine + 2 NADH + 3 H(+). The protein operates within amino-acid biosynthesis; L-histidine biosynthesis; L-histidine from 5-phospho-alpha-D-ribose 1-diphosphate: step 9/9. Functionally, catalyzes the sequential NAD-dependent oxidations of L-histidinol to L-histidinaldehyde and then to L-histidine. The polypeptide is Histidinol dehydrogenase (hisD) (Buchnera aphidicola subsp. Schizaphis graminum (strain Sg)).